The sequence spans 498 residues: MSLADELLADLEEAAEEEEENLIDEDDLETIEEVDEEMQVDLNAESVKSIAKLSDSKLFSEILLKIEGYIQKQPKASEVMGPVEAAPEYKVIVDANNLTVEIENELNIIHKFIRDKYSKRFPELESLVPNALDYIRTVKELGNNLDKCKNNENLQQILTNATIMVVSVTASTTQGQQLTDEELERIEEACDMALELNQSKHRIYEYVESRMSFIAPNLSIIVGASTAAKIMGIAGGLTNLSKMPACNVMLLGAQRKTLTGFSSTSVLPHTGYIYHSEIVQSLPSDLHRKAARLVSAKCTLASRVDSFHENPEGKIGYDLKEEIERKFDKWQEPPPVKQVKPLPAPLDGQRKKRGGRRYRKMKERLGLTEIRKQANRMSFGEIEEDAYQEDLGFSLGHLGKSGSGRIRQAQVNEATKARISKTLQRTLQKQSVVYGGKSTVRDRSSGTASSVAFTPLQGLEIVNPQAAEKKVAEANQKYFSSMAEFLKVKSEKSGTMTQ.

The segment at 1 to 24 (MSLADELLADLEEAAEEEEENLID) is disordered. Residues 7–24 (LLADLEEAAEEEEENLID) show a composition bias toward acidic residues. 2 coiled-coil regions span residues 84–119 (EAAPEYKVIVDANNLTVEIENELNIIHKFIRDKYSK) and 180–214 (DEELERIEEACDMALELNQSKHRIYEYVESRMSFI). The Nop domain occupies 214–332 (IAPNLSIIVG…IERKFDKWQE (119 aa)). The disordered stretch occupies residues 333-356 (PPPVKQVKPLPAPLDGQRKKRGGR). The Nuclear localization signal (NLS) motif lies at 350 to 363 (RKKRGGRRYRKMKE).

Belongs to the PRP31 family. As to quaternary structure, identified in the spliceosome B complex. Component of the U4/U6-U5 tri-snRNP complex. Component of some MLL1/MLL complex.

Its subcellular location is the nucleus. It localises to the nucleus speckle. The protein localises to the cajal body. Functionally, involved in pre-mRNA splicing as component of the spliceosome. Required for the assembly of the U4/U5/U6 tri-snRNP complex, one of the building blocks of the spliceosome. In Xenopus laevis (African clawed frog), this protein is U4/U6 small nuclear ribonucleoprotein Prp31 (prpf31).